A 537-amino-acid polypeptide reads, in one-letter code: Methylmalonate-semialdehyde/malonate-semialdehyde dehydrogenase [acylating], mitochondrial (537 aa).

The N-terminal 34 residues, 1–34 (MAAVAVAAAAAALRARILQVSSKVNSSWQPASSF), are a transit peptide targeting the mitochondrion. Residues Lys-49, Lys-54, Lys-57, and Lys-78 each carry the N6-acetyllysine; alternate modification. Lys-49, Lys-54, Lys-57, and Lys-78 each carry N6-succinyllysine; alternate. N6-acetyllysine is present on Lys-89. Lys-119 and Lys-131 each carry N6-acetyllysine; alternate. N6-succinyllysine; alternate is present on residues Lys-119 and Lys-131. Residues Ala-185, Phe-187, Lys-211, Glu-214, Arg-215, and Ser-264 each contribute to the NAD(+) site. Ser-264 is modified (phosphoserine). Lys-300 carries the post-translational modification N6-acetyllysine. The active-site Nucleophile is the Cys-319. Lys-332 and Lys-333 each carry N6-acetyllysine. An N6-acetyllysine; alternate mark is found at Lys-366 and Lys-378. N6-succinyllysine; alternate is present on residues Lys-366 and Lys-378. The residue at position 382 (Ser-382) is a Phosphoserine. An N6-succinyllysine modification is found at Lys-393. Glu-419 contributes to the NAD(+) binding site. An N6-acetyllysine modification is found at Lys-502. Position 519 is an N6-succinyllysine (Lys-519).

Belongs to the aldehyde dehydrogenase family. As to quaternary structure, homodimer. Post-translationally, the N-terminus is blocked.

The protein localises to the mitochondrion. It carries out the reaction 2-methyl-3-oxopropanoate + NAD(+) + CoA + H2O = propanoyl-CoA + hydrogencarbonate + NADH + H(+). It catalyses the reaction 3-oxopropanoate + NAD(+) + CoA + H2O = hydrogencarbonate + acetyl-CoA + NADH + H(+). The catalysed reaction is (R)-2-methyl-3-oxopropanoate + NAD(+) + CoA + H2O = propanoyl-CoA + hydrogencarbonate + NADH + H(+). The enzyme catalyses (S)-2-methyl-3-oxopropanoate + NAD(+) + CoA + H2O = propanoyl-CoA + hydrogencarbonate + NADH + H(+). Its function is as follows. Malonate and methylmalonate semialdehyde dehydrogenase involved in the catabolism of valine, thymine, and compounds catabolized by way of beta-alanine, including uracil and cytidine. This Bos taurus (Bovine) protein is Methylmalonate-semialdehyde/malonate-semialdehyde dehydrogenase [acylating], mitochondrial (ALDH6A1).